Reading from the N-terminus, the 21-residue chain is Bombinin-H1/H3 (21 aa).

Residue isoleucine 2 is modified to D-allo-isoleucine; in form H3. The residue at position 20 (isoleucine 20) is an Isoleucine amide.

This sequence belongs to the bombinin family. In terms of tissue distribution, expressed by the skin glands.

It localises to the secreted. Has antimicrobial and hemolytic activities. In Bombina variegata (Yellow-bellied toad), this protein is Bombinin-H1/H3.